Here is a 728-residue protein sequence, read N- to C-terminus: MSDRIDRDVINALIAGHFADPFSVLGMHKTTAGLEVRALLPDATDVWVIEPKTGRKLAKLECLDSRGFFSGVIPRRKNFFRYQLAVVWHGQQNLIDDPYRFGPLIQEMDAWLLSEGTHLRPYETLGAHADTMDGVTGTRFSVWAPNARRVSVVGQFNYWDGRRHPMRLRKESGIWELFIPGAHNGQLYKYEMIDANGNLRLKSDPYAFEAQMRPETASLICGLPEKVVQTEERKKANQFDAPISIYEVHLGSWRRHTDNNFWLSYRELADQLVPYAKWMGFTHLELLPINEHPFDGSWGYQPTGLYAPTRRFGTRDDFRYFIDAAHAAGLNVILDWVPGHFPTDDFALAEFDGTNLYEHSDPREGYHQDWNTLIYNYGRREVSNFLVGNALYWIERFGIDALRVDAVASMIYRDYSRKEGEWIPNEFGGRENLEAIEFLRNTNRILGEQVSGAVTMAEESTDFPGVSRPQDMGGLGFWYKWNLGWMHDTLDYMKLDPIYRQYHHDKLTFGMLYNYTENFVLPLSHDEVVHGKKSILDRMPGDAWQKFANLRAYYGWMWAFPGKKLLFMGNEFAQGREWNHDASLDWHLLEGGDNWHHGVQRLVRDLNLTYRHHKAMHELDFDPYGFEWLVVDDKERSVLIFVRRDKEGNEIIVASNFTPVPRHDYRFGINQPGKWREILNTDSMHYHGSNAGNGGAVHSDEIASHGRQHSLSLTLPPLATIWLVREAE.

The active-site Nucleophile is the Asp405. Glu458 (proton donor) is an active-site residue.

This sequence belongs to the glycosyl hydrolase 13 family. GlgB subfamily. Monomer.

It carries out the reaction Transfers a segment of a (1-&gt;4)-alpha-D-glucan chain to a primary hydroxy group in a similar glucan chain.. It participates in glycan biosynthesis; glycogen biosynthesis. Catalyzes the formation of the alpha-1,6-glucosidic linkages in glycogen by scission of a 1,4-alpha-linked oligosaccharide from growing alpha-1,4-glucan chains and the subsequent attachment of the oligosaccharide to the alpha-1,6 position. In Escherichia coli O6:K15:H31 (strain 536 / UPEC), this protein is 1,4-alpha-glucan branching enzyme GlgB.